We begin with the raw amino-acid sequence, 212 residues long: Nascent polypeptide-associated complex subunit alpha (212 aa).

Disordered stretches follow at residues 1–54 and 123–177; these read MSNP…SRNE and QLAA…EDKD. The segment covering 22 to 38 has biased composition (acidic residues); sequence AEDEGSDSSDSEAEGEE. One can recognise an NAC-A/B domain in the interval 51–116; sequence SRNEKKARKS…AKIEDLNSQA (66 aa). The span at 128–157 shows a compositional bias: basic and acidic residues; it reads ESHDHAGHDHSGHDHSHDHGKGKAVDTEEK. Residues 158 to 169 show a composition bias toward acidic residues; the sequence is KEEEEDDTEEVD. The region spanning 173-212 is the UBA domain; the sequence is LEDKDIELVMTQASVSRNKAVKALKENDNDIVNSIMALSI.

Belongs to the NAC-alpha family. In terms of assembly, part of the nascent polypeptide-associated complex (NAC), consisting of EGD2 and EGD1. NAC associates with ribosomes via EGD1.

The protein resides in the cytoplasm. Its subcellular location is the nucleus. Its function is as follows. Component of the nascent polypeptide-associated complex (NAC), a dynamic component of the ribosomal exit tunnel, protecting the emerging polypeptides from interaction with other cytoplasmic proteins to ensure appropriate nascent protein targeting. The NAC complex also promotes mitochondrial protein import by enhancing productive ribosome interactions with the outer mitochondrial membrane and blocks the inappropriate interaction of ribosomes translating non-secretory nascent polypeptides with translocation sites in the membrane of the endoplasmic reticulum. EGD2 may also be involved in transcription regulation. The chain is Nascent polypeptide-associated complex subunit alpha (egd2) from Botryotinia fuckeliana (strain B05.10) (Noble rot fungus).